Reading from the N-terminus, the 421-residue chain is Serine--tRNA ligase (421 aa).

L-serine is bound at residue 231–233 (TGE). Residue 262-264 (RRE) coordinates ATP. Glutamate 285 contributes to the L-serine binding site. Position 349–352 (349–352 (EVSS)) interacts with ATP. Serine 384 is a binding site for L-serine.

It belongs to the class-II aminoacyl-tRNA synthetase family. Type-1 seryl-tRNA synthetase subfamily. As to quaternary structure, homodimer. The tRNA molecule binds across the dimer.

It is found in the cytoplasm. It carries out the reaction tRNA(Ser) + L-serine + ATP = L-seryl-tRNA(Ser) + AMP + diphosphate + H(+). It catalyses the reaction tRNA(Sec) + L-serine + ATP = L-seryl-tRNA(Sec) + AMP + diphosphate + H(+). It functions in the pathway aminoacyl-tRNA biosynthesis; selenocysteinyl-tRNA(Sec) biosynthesis; L-seryl-tRNA(Sec) from L-serine and tRNA(Sec): step 1/1. In terms of biological role, catalyzes the attachment of serine to tRNA(Ser). Is also able to aminoacylate tRNA(Sec) with serine, to form the misacylated tRNA L-seryl-tRNA(Sec), which will be further converted into selenocysteinyl-tRNA(Sec). The chain is Serine--tRNA ligase from Methylacidiphilum infernorum (isolate V4) (Methylokorus infernorum (strain V4)).